Reading from the N-terminus, the 252-residue chain is MHNKIYNSFIDRKAKGIKSFAVLIDPDKVNPADIADLAAKCTAAKVDYIFLGGSLVITNHLDECVQQFKTLCDIPVVLFPGSPSQVSRYADALLYLSVISGRNPELLIGQHVLSAPAVKKSGLEVISTGYVLIDGGAPTTVSYISNTTPIPSDKDDIAMCTAMAGEMLGMKVVFMDAGSGARKPITESMISRVASQVSAPIIVGGGIRDAEKAYLNCKAGADIIVVGNAIEKETSLIKEMADAVHAAAPVLK.

Mg(2+) contacts are provided by Asp25 and Ser54. Residues 174–180 (FMDAGSG), 205–206 (GG), and 227–228 (GN) contribute to the sn-glycerol 1-phosphate site.

It belongs to the GGGP/HepGP synthase family. Group II subfamily. In terms of assembly, homohexamer. Requires Mg(2+) as cofactor.

It catalyses the reaction sn-glycerol 1-phosphate + (2E,6E,10E)-geranylgeranyl diphosphate = sn-3-O-(geranylgeranyl)glycerol 1-phosphate + diphosphate. Functionally, prenyltransferase that catalyzes the transfer of the geranylgeranyl moiety of geranylgeranyl diphosphate (GGPP) to the C3 hydroxyl of sn-glycerol-1-phosphate (G1P). The chain is Geranylgeranylglyceryl phosphate synthase from Chitinophaga pinensis (strain ATCC 43595 / DSM 2588 / LMG 13176 / NBRC 15968 / NCIMB 11800 / UQM 2034).